Here is a 500-residue protein sequence, read N- to C-terminus: L-arabinose isomerase (500 aa).

Mn(2+)-binding residues include E306, E333, H349, and H448.

It belongs to the arabinose isomerase family. Requires Mn(2+) as cofactor.

It catalyses the reaction beta-L-arabinopyranose = L-ribulose. Its pathway is carbohydrate degradation; L-arabinose degradation via L-ribulose; D-xylulose 5-phosphate from L-arabinose (bacterial route): step 1/3. In terms of biological role, catalyzes the conversion of L-arabinose to L-ribulose. This chain is L-arabinose isomerase, found in Saccharophagus degradans (strain 2-40 / ATCC 43961 / DSM 17024).